Here is a 120-residue protein sequence, read N- to C-terminus: Large ribosomal subunit protein uL18 (120 aa).

It belongs to the universal ribosomal protein uL18 family. In terms of assembly, part of the 50S ribosomal subunit; part of the 5S rRNA/L5/L18/L25 subcomplex. Contacts the 5S and 23S rRNAs.

Functionally, this is one of the proteins that bind and probably mediate the attachment of the 5S RNA into the large ribosomal subunit, where it forms part of the central protuberance. The protein is Large ribosomal subunit protein uL18 of Rhizobium rhizogenes (strain K84 / ATCC BAA-868) (Agrobacterium radiobacter).